Here is a 201-residue protein sequence, read N- to C-terminus: 3-isopropylmalate dehydratase small subunit (201 aa).

This sequence belongs to the LeuD family. LeuD type 1 subfamily. Heterodimer of LeuC and LeuD.

It catalyses the reaction (2R,3S)-3-isopropylmalate = (2S)-2-isopropylmalate. The protein operates within amino-acid biosynthesis; L-leucine biosynthesis; L-leucine from 3-methyl-2-oxobutanoate: step 2/4. Its function is as follows. Catalyzes the isomerization between 2-isopropylmalate and 3-isopropylmalate, via the formation of 2-isopropylmaleate. This Cereibacter sphaeroides (strain KD131 / KCTC 12085) (Rhodobacter sphaeroides) protein is 3-isopropylmalate dehydratase small subunit.